Reading from the N-terminus, the 354-residue chain is Fructose-bisphosphate aldolase (354 aa).

Position 61 (Ser-61) interacts with D-glyceraldehyde 3-phosphate. Residue Asp-104 is the Proton donor of the active site. Positions 105, 139, 169, and 221 each coordinate Zn(2+). Dihydroxyacetone phosphate is bound at residue Gly-222. His-260 lines the Zn(2+) pocket. Dihydroxyacetone phosphate contacts are provided by residues 261 to 263 and 282 to 285; these read GGS and NIDT.

It belongs to the class II fructose-bisphosphate aldolase family. As to quaternary structure, homodimer. Zn(2+) is required as a cofactor.

It catalyses the reaction beta-D-fructose 1,6-bisphosphate = D-glyceraldehyde 3-phosphate + dihydroxyacetone phosphate. It functions in the pathway carbohydrate degradation; glycolysis; D-glyceraldehyde 3-phosphate and glycerone phosphate from D-glucose: step 4/4. Its function is as follows. Catalyzes the aldol condensation of dihydroxyacetone phosphate (DHAP or glycerone-phosphate) with glyceraldehyde 3-phosphate (G3P) to form fructose 1,6-bisphosphate (FBP) in gluconeogenesis and the reverse reaction in glycolysis. This Campylobacter jejuni subsp. jejuni serotype O:2 (strain ATCC 700819 / NCTC 11168) protein is Fructose-bisphosphate aldolase (fba).